A 657-amino-acid chain; its full sequence is tRNA 5-methylaminomethyl-2-thiouridine biosynthesis bifunctional protein MnmC (657 aa).

The tRNA (mnm(5)s(2)U34)-methyltransferase stretch occupies residues 1-236; sequence MPDRLVPATL…KRAMLVGEYA (236 aa). The FAD-dependent cmnm(5)s(2)U34 oxidoreductase stretch occupies residues 261–657; that stretch reads IGAGVAGCAV…LRARQVSAAD (397 aa).

The protein in the N-terminal section; belongs to the methyltransferase superfamily. tRNA (mnm(5)s(2)U34)-methyltransferase family. It in the C-terminal section; belongs to the DAO family. FAD is required as a cofactor.

The protein localises to the cytoplasm. It carries out the reaction 5-aminomethyl-2-thiouridine(34) in tRNA + S-adenosyl-L-methionine = 5-methylaminomethyl-2-thiouridine(34) in tRNA + S-adenosyl-L-homocysteine + H(+). Functionally, catalyzes the last two steps in the biosynthesis of 5-methylaminomethyl-2-thiouridine (mnm(5)s(2)U) at the wobble position (U34) in tRNA. Catalyzes the FAD-dependent demodification of cmnm(5)s(2)U34 to nm(5)s(2)U34, followed by the transfer of a methyl group from S-adenosyl-L-methionine to nm(5)s(2)U34, to form mnm(5)s(2)U34. The sequence is that of tRNA 5-methylaminomethyl-2-thiouridine biosynthesis bifunctional protein MnmC from Burkholderia multivorans (strain ATCC 17616 / 249).